A 516-amino-acid chain; its full sequence is Coiled-coil domain-containing protein 82 (516 aa).

Basic residues predominate over residues 1-13 (MVHARRHETRKNS). The disordered stretch occupies residues 1–265 (MVHARRHETR…DYGDAENEDD (265 aa)). Over residues 38 to 62 (DSDEELDSDEEIGSDEDLDGGESID) the composition is skewed to acidic residues. A compositionally biased stretch (basic and acidic residues) spans 78–96 (IPEKETELNLIKVESERSN). Over residues 98–107 (KCHMNTSSSS) the composition is skewed to polar residues. Basic and acidic residues predominate over residues 113 to 135 (MNKTKHNDLPDDEAHPGQAEGHH). 2 positions are modified to phosphoserine: Ser-170 and Ser-194. Position 202 is a phosphothreonine (Thr-202). Positions 204–232 (EKSPAARKREYHQKLQELCERSRQKQRHN) form a coiled coil. Over residues 215-226 (HQKLQELCERSR) the composition is skewed to basic and acidic residues. The span at 248–265 (TDEDEDDDDYGDAENEDD) shows a compositional bias: acidic residues. Ser-301 carries the phosphoserine modification.

The polypeptide is Coiled-coil domain-containing protein 82 (Ccdc82) (Rattus norvegicus (Rat)).